Consider the following 84-residue polypeptide: METVITTTIIASAILLAVAALGTALGFAILGGKFLESSARQPELASSLQIKMFIVAGLLDAISMIAVGIALLFIFANPFIDLLK.

Transmembrane regions (helical) follow at residues 9–29 (IIAS…GFAI) and 54–74 (IVAG…LLFI).

It belongs to the ATPase C chain family. As to quaternary structure, F-type ATPases have 2 components, F(1) - the catalytic core - and F(0) - the membrane proton channel. F(1) has five subunits: alpha(3), beta(3), gamma(1), delta(1), epsilon(1). F(0) has three main subunits: a(1), b(2) and c(10-14). The alpha and beta chains form an alternating ring which encloses part of the gamma chain. F(1) is attached to F(0) by a central stalk formed by the gamma and epsilon chains, while a peripheral stalk is formed by the delta and b chains.

It localises to the cell inner membrane. Its function is as follows. F(1)F(0) ATP synthase produces ATP from ADP in the presence of a proton or sodium gradient. F-type ATPases consist of two structural domains, F(1) containing the extramembraneous catalytic core and F(0) containing the membrane proton channel, linked together by a central stalk and a peripheral stalk. During catalysis, ATP synthesis in the catalytic domain of F(1) is coupled via a rotary mechanism of the central stalk subunits to proton translocation. In terms of biological role, key component of the F(0) channel; it plays a direct role in translocation across the membrane. A homomeric c-ring of between 10-14 subunits forms the central stalk rotor element with the F(1) delta and epsilon subunits. This is ATP synthase subunit c from Pasteurella multocida (strain Pm70).